The sequence spans 245 residues: tRNA (guanine-N(1)-)-methyltransferase (245 aa).

S-adenosyl-L-methionine is bound by residues Gly114 and 134–139 (IGDYIL).

It belongs to the RNA methyltransferase TrmD family. Homodimer.

The protein localises to the cytoplasm. It catalyses the reaction guanosine(37) in tRNA + S-adenosyl-L-methionine = N(1)-methylguanosine(37) in tRNA + S-adenosyl-L-homocysteine + H(+). Its function is as follows. Specifically methylates guanosine-37 in various tRNAs. This is tRNA (guanine-N(1)-)-methyltransferase from Listeria welshimeri serovar 6b (strain ATCC 35897 / DSM 20650 / CCUG 15529 / CIP 8149 / NCTC 11857 / SLCC 5334 / V8).